The sequence spans 300 residues: MTSIDWRSALTDDEQGSIRDIVAAATRHDGVAPVGDQVLRELPADRTRHLVAVDPDAGAVVGYLNLAPASDTAPPMAELVVHPDFRRRGTGAAMARAGLAEGGTHARIWAHGNLEAARATARTLGLQVVRELLQMRRPLTDLPPVTVADGVRLATYSGPGDDPELLRVNNSAFAWHPEQGGWTDADIAERRAEAWFDPAGLFMAFDDASGKLLGFHWTKVHGPDLGEVYVVGVDPAAQGRGLGATLTLTGLHHLAERLSNSPQPTVMLYVEADNGAAVKTYRRLGFDVSSVDAAYAAVAD.

N-acetyltransferase domains lie at 4–140 (IDWR…RPLT) and 151–300 (VRLA…AVAD). Aspartate 36 serves as a coordination point for 1D-myo-inositol 2-(L-cysteinylamino)-2-deoxy-alpha-D-glucopyranoside. 79 to 81 (LVV) serves as a coordination point for acetyl-CoA. 3 residues coordinate 1D-myo-inositol 2-(L-cysteinylamino)-2-deoxy-alpha-D-glucopyranoside: glutamate 178, lysine 219, and glutamate 227. 231–233 (VGV) contacts acetyl-CoA. Residue tyrosine 269 participates in 1D-myo-inositol 2-(L-cysteinylamino)-2-deoxy-alpha-D-glucopyranoside binding. 274–279 (NGAAVK) contributes to the acetyl-CoA binding site.

It belongs to the acetyltransferase family. MshD subfamily. In terms of assembly, monomer.

It catalyses the reaction 1D-myo-inositol 2-(L-cysteinylamino)-2-deoxy-alpha-D-glucopyranoside + acetyl-CoA = mycothiol + CoA + H(+). Its function is as follows. Catalyzes the transfer of acetyl from acetyl-CoA to desacetylmycothiol (Cys-GlcN-Ins) to form mycothiol. This Mycobacterium sp. (strain JLS) protein is Mycothiol acetyltransferase.